The primary structure comprises 614 residues: uncharacterized protein (614 aa).

Helical transmembrane passes span 41–61, 87–107, 157–177, and 178–198; these read GWIF…AVLF, LIGM…ASAV, DTVL…ITSG, and VVLV…IILF. Positions 43–330 constitute an ABC transmembrane type-1 domain; sequence IFLLAILTVG…IMWESARLFE (288 aa). In terms of domain architecture, ABC transporter spans 364-603; that stretch reads IKFNDITFAY…NGLYAKLWNH (240 aa). Residue 397 to 404 coordinates ATP; the sequence is GRSGAGKS.

It belongs to the ABC transporter superfamily.

Its subcellular location is the cell membrane. This is an uncharacterized protein from Haemophilus influenzae (strain ATCC 51907 / DSM 11121 / KW20 / Rd).